The chain runs to 294 residues: Urease accessory protein UreD (294 aa).

A disordered region spans residues 1 to 22; it reads MSVEKPVAAGRQNSKATGRHKG.

Belongs to the UreD family. As to quaternary structure, ureD, UreF and UreG form a complex that acts as a GTP-hydrolysis-dependent molecular chaperone, activating the urease apoprotein by helping to assemble the nickel containing metallocenter of UreC. The UreE protein probably delivers the nickel.

The protein localises to the cytoplasm. Its function is as follows. Required for maturation of urease via the functional incorporation of the urease nickel metallocenter. This is Urease accessory protein UreD from Alcanivorax borkumensis (strain ATCC 700651 / DSM 11573 / NCIMB 13689 / SK2).